A 111-amino-acid chain; its full sequence is Rubredoxin (111 aa).

A Rubredoxin-like domain is found at 11 to 62 (LDRFECRSCGYVYEPEKGDSKHDIAPETPFAELPINWRCPVCTAKKAAFSNI). 4 residues coordinate Fe cation: cysteine 16, cysteine 19, cysteine 49, and cysteine 52.

The protein belongs to the rubredoxin family. It depends on Fe(3+) as a cofactor.

Its function is as follows. Rubredoxin is a small nonheme, iron protein lacking acid-labile sulfide. Its single Fe, chelated to 4 Cys, functions as an electron acceptor and may also stabilize the conformation of the molecule. Could be involved in hydrogenase-linked redox processes. In Trichormus variabilis (strain ATCC 29413 / PCC 7937) (Anabaena variabilis), this protein is Rubredoxin (rub).